Consider the following 482-residue polypeptide: ATP synthase subunit beta (482 aa).

162-169 (GGAGVGKT) contacts ATP.

This sequence belongs to the ATPase alpha/beta chains family. As to quaternary structure, F-type ATPases have 2 components, CF(1) - the catalytic core - and CF(0) - the membrane proton channel. CF(1) has five subunits: alpha(3), beta(3), gamma(1), delta(1), epsilon(1). CF(0) has four main subunits: a(1), b(1), b'(1) and c(9-12).

Its subcellular location is the cellular thylakoid membrane. It carries out the reaction ATP + H2O + 4 H(+)(in) = ADP + phosphate + 5 H(+)(out). Produces ATP from ADP in the presence of a proton gradient across the membrane. The catalytic sites are hosted primarily by the beta subunits. The protein is ATP synthase subunit beta of Trichormus variabilis (strain ATCC 29413 / PCC 7937) (Anabaena variabilis).